Reading from the N-terminus, the 341-residue chain is Methionine import ATP-binding protein MetN 2 (341 aa).

The 240-residue stretch at Ile2–Val241 folds into the ABC transporter domain. Residue Gly38–Ser45 participates in ATP binding.

Belongs to the ABC transporter superfamily. Methionine importer (TC 3.A.1.24) family. The complex is composed of two ATP-binding proteins (MetN), two transmembrane proteins (MetI) and a solute-binding protein (MetQ).

The protein localises to the cell membrane. It catalyses the reaction L-methionine(out) + ATP + H2O = L-methionine(in) + ADP + phosphate + H(+). The catalysed reaction is D-methionine(out) + ATP + H2O = D-methionine(in) + ADP + phosphate + H(+). Functionally, part of the ABC transporter complex MetNIQ involved in methionine import. Responsible for energy coupling to the transport system. This is Methionine import ATP-binding protein MetN 2 from Staphylococcus aureus (strain USA300).